A 165-amino-acid chain; its full sequence is RNA pyrophosphohydrolase (165 aa).

The region spanning 13–154 is the Nudix hydrolase domain; the sequence is PYRQGVGIML…KRPVYEQVVA (142 aa). Positions 46–67 match the Nudix box motif; sequence GGIDAGEDPETAAWREMEEEIG.

The protein belongs to the Nudix hydrolase family. RppH subfamily. A divalent metal cation is required as a cofactor.

In terms of biological role, accelerates the degradation of transcripts by removing pyrophosphate from the 5'-end of triphosphorylated RNA, leading to a more labile monophosphorylated state that can stimulate subsequent ribonuclease cleavage. This is RNA pyrophosphohydrolase from Rhodospirillum rubrum (strain ATCC 11170 / ATH 1.1.1 / DSM 467 / LMG 4362 / NCIMB 8255 / S1).